Consider the following 299-residue polypeptide: MALIHGSVPGTSAVRLVFSTSASPSRFCLNVPVVKQGWKNSCRRRVLRAMVQETVQGSPLVYAREMERLSAKESLLLALKDAGGFEALVTGKTTNMQRIDVNERITSLERLNPTPRPTTSPCFEGRWNFEWFGSGSPGLLAARVIFERFPSTLANLSRMEILIKDANAKATANIKLLNSIESKIILSSKLTVEGPLRLKEEYVEGMLETPTVIEEAVPEQLKSALGQAATTLQQLPALIKDTLASGLRIPLSGSFERFFMISYLDEEILIVRDTEGVPEVLTRIETPSSTVVETIEYDS.

A chloroplast-targeting transit peptide spans M1–R48. An N-acetylvaline modification is found at A2.

This sequence belongs to the PAP/fibrillin family.

The protein resides in the plastid. It localises to the chloroplast. It is found in the plastoglobule. This Arabidopsis thaliana (Mouse-ear cress) protein is Probable plastid-lipid-associated protein 13, chloroplastic (PAP13).